The sequence spans 469 residues: UDP-N-acetylmuramate--L-alanine ligase (469 aa).

112 to 118 is a binding site for ATP; that stretch reads GTHGKTT.

Belongs to the MurCDEF family.

It localises to the cytoplasm. The enzyme catalyses UDP-N-acetyl-alpha-D-muramate + L-alanine + ATP = UDP-N-acetyl-alpha-D-muramoyl-L-alanine + ADP + phosphate + H(+). Its pathway is cell wall biogenesis; peptidoglycan biosynthesis. In terms of biological role, cell wall formation. The polypeptide is UDP-N-acetylmuramate--L-alanine ligase (Leptothrix cholodnii (strain ATCC 51168 / LMG 8142 / SP-6) (Leptothrix discophora (strain SP-6))).